We begin with the raw amino-acid sequence, 353 residues long: 3-dehydroquinate synthase (353 aa).

NAD(+) is bound by residues 61-66 (DGEEAK), 119-120 (TT), K132, and K141. Residues E174, H238, and H254 each coordinate Zn(2+).

The protein belongs to the sugar phosphate cyclases superfamily. Dehydroquinate synthase family. Co(2+) is required as a cofactor. The cofactor is Zn(2+). NAD(+) serves as cofactor.

The protein resides in the cytoplasm. The catalysed reaction is 7-phospho-2-dehydro-3-deoxy-D-arabino-heptonate = 3-dehydroquinate + phosphate. The protein operates within metabolic intermediate biosynthesis; chorismate biosynthesis; chorismate from D-erythrose 4-phosphate and phosphoenolpyruvate: step 2/7. Its function is as follows. Catalyzes the conversion of 3-deoxy-D-arabino-heptulosonate 7-phosphate (DAHP) to dehydroquinate (DHQ). This is 3-dehydroquinate synthase from Sulfolobus acidocaldarius (strain ATCC 33909 / DSM 639 / JCM 8929 / NBRC 15157 / NCIMB 11770).